The chain runs to 389 residues: Stilbene synthase 1 (389 aa).

Position 55–58 (55–58 (KFQR)) interacts with substrate. Cysteine 164 is an active-site residue. Residues leucine 267 and 305–307 (GGR) contribute to the substrate site.

The protein belongs to the thiolase-like superfamily. Chalcone/stilbene synthases family. As to quaternary structure, homodimer.

It is found in the cytoplasm. It catalyses the reaction 4-coumaroyl-CoA + 3 malonyl-CoA + 3 H(+) = trans-resveratrol + 4 CO2 + 4 CoA. It participates in phytoalexin biosynthesis; 3,4',5-trihydroxystilbene biosynthesis; 3,4',5-trihydroxystilbene from trans-4-coumarate: step 2/2. This is Stilbene synthase 1 from Arachis hypogaea (Peanut).